The sequence spans 163 residues: MPLASPRQLFLLAFLACVAIMGGALYLEHVVGLEACPLCVVQRIFFILIGLTCLAGAIQGPGLRGRRIYSVLVFLLALGGGATAARQVWLQTVPLDQLPACLPSLDYMMQALPFQEVIRLVLHGTADCAQVSWTLFTLSIPEWSLLAFVAYLGFSIVQFLRRA.

The Cytoplasmic segment spans residues 1–9 (MPLASPRQL). The helical transmembrane segment at 10-26 (FLLAFLACVAIMGGALY) threads the bilayer. The Periplasmic portion of the chain corresponds to 27–44 (LEHVVGLEACPLCVVQRI). An intrachain disulfide couples cysteine 36 to cysteine 39. Residues 45–61 (FFILIGLTCLAGAIQGP) form a helical membrane-spanning segment. Residues 62-67 (GLRGRR) are Cytoplasmic-facing. A helical transmembrane segment spans residues 68–85 (IYSVLVFLLALGGGATAA). Topologically, residues 86–142 (RQVWLQTVPLDQLPACLPSLDYMMQALPFQEVIRLVLHGTADCAQVSWTLFTLSIPE) are periplasmic. A disulfide bridge links cysteine 101 with cysteine 128. A helical membrane pass occupies residues 143 to 161 (WSLLAFVAYLGFSIVQFLR). The Cytoplasmic segment spans residues 162 to 163 (RA).

It belongs to the DsbB family.

Its subcellular location is the cell inner membrane. In terms of biological role, required for disulfide bond formation in some periplasmic proteins. Acts by oxidizing the DsbA protein. This is Disulfide bond formation protein B 1 (dsbB1) from Pseudomonas aeruginosa (strain ATCC 15692 / DSM 22644 / CIP 104116 / JCM 14847 / LMG 12228 / 1C / PRS 101 / PAO1).